The chain runs to 347 residues: NADH-ubiquinone oxidoreductase chain 2 (347 aa).

Transmembrane regions (helical) follow at residues 1–21 (MTPM…TLTL), 26–46 (WLLM…LLTY), 56–76 (AIKY…AASL), 96–116 (GIMT…YWVP), 153–171 (ILLT…NGLN), 178–198 (VMAY…IYFP), 199–219 (TLTT…FTVF), 237–257 (APIM…LPPL), 277–297 (IMAT…MRII), and 326–346 (LPTL…FITL).

It belongs to the complex I subunit 2 family. In terms of assembly, core subunit of respiratory chain NADH dehydrogenase (Complex I) which is composed of 45 different subunits. Interacts with TMEM242.

Its subcellular location is the mitochondrion inner membrane. The catalysed reaction is a ubiquinone + NADH + 5 H(+)(in) = a ubiquinol + NAD(+) + 4 H(+)(out). Functionally, core subunit of the mitochondrial membrane respiratory chain NADH dehydrogenase (Complex I) which catalyzes electron transfer from NADH through the respiratory chain, using ubiquinone as an electron acceptor. Essential for the catalytic activity and assembly of complex I. The sequence is that of NADH-ubiquinone oxidoreductase chain 2 from Ornithorhynchus anatinus (Duckbill platypus).